The following is a 283-amino-acid chain: Foldase protein PrsA 3 (283 aa).

An N-terminal signal peptide occupies residues 1 to 21 (MKKKKIFIGTIISCVMLALSA). C22 is lipidated: N-palmitoyl cysteine. Residue C22 is the site of S-diacylglycerol cysteine attachment. The PpiC domain maps to 132–222 (KPEMKVSHIL…YGYHIIKVTD (91 aa)).

This sequence belongs to the PrsA family.

The protein resides in the cell membrane. It carries out the reaction [protein]-peptidylproline (omega=180) = [protein]-peptidylproline (omega=0). Plays a major role in protein secretion by helping the post-translocational extracellular folding of several secreted proteins. This is Foldase protein PrsA 3 (prsA3) from Bacillus cereus (strain ATCC 14579 / DSM 31 / CCUG 7414 / JCM 2152 / NBRC 15305 / NCIMB 9373 / NCTC 2599 / NRRL B-3711).